Reading from the N-terminus, the 34-residue chain is ECRYWLGGCSKTGDCCEHLSCSPKWHWCVWDGTF.

3 disulfides stabilise this stretch: C2-C16, C9-C21, and C15-C28.

This sequence belongs to the neurotoxin 10 (Hwtx-1) family. 54 (ProTx-1) subfamily. As to expression, expressed by the venom gland.

The protein resides in the secreted. Functionally, ion channel impairing toxin that inhibits several voltage-gated sodium channels. It acts by inhibiting the inward component of the sodium current and by shifting the voltage dependence of channel activation to more depolarized potentials. Its most potent activity is on Nav1.7/SCN9A (IC(50)=167 nM), followed by Nav1.6/SCN8A (IC(50)=696 nM), and Nav1.2/SCN2A (IC(50)=3.54 uM). In Phormingochilus everetti (Malaysian purple earth tiger tarantula), this protein is Beta/mu-theraphotoxin-Pe1b.